Reading from the N-terminus, the 130-residue chain is Small ribosomal subunit protein uS9 (130 aa).

The tract at residues 102 to 130 (GFLTRDPRKKERKKYGLKKARKSPQFSKR) is disordered. Basic residues predominate over residues 111-130 (KERKKYGLKKARKSPQFSKR).

This sequence belongs to the universal ribosomal protein uS9 family.

The protein is Small ribosomal subunit protein uS9 of Finegoldia magna (strain ATCC 29328 / DSM 20472 / WAL 2508) (Peptostreptococcus magnus).